The chain runs to 256 residues: tRNA pseudouridine synthase A (256 aa).

Aspartate 52 functions as the Nucleophile in the catalytic mechanism. A substrate-binding site is contributed by tyrosine 110.

This sequence belongs to the tRNA pseudouridine synthase TruA family. In terms of assembly, homodimer.

The enzyme catalyses uridine(38/39/40) in tRNA = pseudouridine(38/39/40) in tRNA. In terms of biological role, formation of pseudouridine at positions 38, 39 and 40 in the anticodon stem and loop of transfer RNAs. The sequence is that of tRNA pseudouridine synthase A from Stenotrophomonas maltophilia (strain K279a).